A 442-amino-acid chain; its full sequence is Glutamate-1-semialdehyde 2,1-aminomutase (442 aa).

Lys282 is subject to N6-(pyridoxal phosphate)lysine.

Belongs to the class-III pyridoxal-phosphate-dependent aminotransferase family. HemL subfamily. In terms of assembly, homodimer. The cofactor is pyridoxal 5'-phosphate.

It localises to the cytoplasm. It catalyses the reaction (S)-4-amino-5-oxopentanoate = 5-aminolevulinate. It functions in the pathway porphyrin-containing compound metabolism; protoporphyrin-IX biosynthesis; 5-aminolevulinate from L-glutamyl-tRNA(Glu): step 2/2. The sequence is that of Glutamate-1-semialdehyde 2,1-aminomutase from Polaromonas naphthalenivorans (strain CJ2).